The primary structure comprises 368 residues: MEAIAKRLDACQEQLLELYEENSTDLHKHVLHWKCMRHESVLLYKAKQMGLSHIGMQVVPPLKVSEAKGHNAIEMQMHLESLLRTEYSMEPWTLQETSYEMWQTPPKRCFKKRGKTVEVKFDGCANNTMDYVVWTDVYVQDNDTWVKVHSMVDAKGIYYTCGQFKTYYVNFVKEAEKYGSTKHWEVCYGSTVICSPASVSSTTQEVSIPESTTYTPAQTSTLVSSSTKEDAVQTPPRKRARGVQQSPCNALCVAHIGPVDSGNHNLITNNHDQHQRRNNSNSSATPIVQFQGESNCLKCFRYRLNDRHRHLFDLISSTWHWASSKAPHKHAIVTVTYDSEEQRQQFLDVVKIPPTISHKLGFMSLHLL.

Residues 1-200 (MEAIAKRLDA…TVICSPASVS (200 aa)) are transactivation domain. The span at 208-226 (IPESTTYTPAQTSTLVSSS) shows a compositional bias: polar residues. The tract at residues 208–241 (IPESTTYTPAQTSTLVSSSTKEDAVQTPPRKRAR) is disordered. A DNA-binding domain region spans residues 284–368 (ATPIVQFQGE…KLGFMSLHLL (85 aa)).

The protein belongs to the papillomaviridae E2 protein family. As to quaternary structure, binds DNA as homodimer. Interacts with protein E1; this interaction greatly increases E1 DNA-binding activity. Interacts with protein L1; this interaction enhances E2-dependent replication and transcription activation. Interacts with protein L2; this interaction inhibits E2 transcriptional activity but not DNA replication function E2. Interacts with protein E7; this interaction inhibits E7 oncogenic activity. Interacts with host TAF1; this interaction modulates E2-dependent transcriptional regulation. Interacts with host BRD4; this interaction mediates E2 transcriptional activation function. Additionally, the interaction with host BRD4 on mitotic chromosomes mediates tethering of the viral genome. Interacts with host TOPBP1; this interaction is required for optimal viral DNA replication. In terms of processing, phosphorylated.

It is found in the host nucleus. Functionally, plays a role in the initiation of viral DNA replication. A dimer of E2 interacts with a dimer of E1 in order to improve specificity of E1 DNA binding activity. Once the complex recognizes and binds DNA at specific sites, the E2 dimer is removed from DNA. E2 also regulates viral transcription through binding to the E2RE response element (5'-ACCNNNNNNGGT-3') present in multiple copies in the regulatory regions of the viral genome. Activates or represses transcription depending on E2RE's position with regards to proximal promoter elements including the TATA-box. Repression occurs by sterically hindering the assembly of the transcription initiation complex. This is Regulatory protein E2 from Human papillomavirus type 6b.